A 273-amino-acid polypeptide reads, in one-letter code: MNRLFVAYKPAGIGSNLFLSRIKREYKTKKAGFSGTLDPFAKGVLIIGMGSYTKLFRFLAKAPKVYRATLWLGAKSDTLDTEMIEEVEILEEFDEADVLKAIKSLEGSLEYEPPIFSAKQINGQRAYDLARAGVEFSLNKINSTIYETKLVSYCHPFVTFEAIVSEGTYIRSLGLIIANRLGVKNGSLSALERLSEGRFKYDNHKPLDIKKSLNMMQNFYHGDSDNLKYGRVLALNDLEIKSDGFYWLDSGSFISIIHVKDAKVNYELGRIEC.

The Nucleophile role is filled by D38.

The protein belongs to the pseudouridine synthase TruB family. Type 1 subfamily.

The catalysed reaction is uridine(55) in tRNA = pseudouridine(55) in tRNA. Functionally, responsible for synthesis of pseudouridine from uracil-55 in the psi GC loop of transfer RNAs. This Sulfurimonas denitrificans (strain ATCC 33889 / DSM 1251) (Thiomicrospira denitrificans (strain ATCC 33889 / DSM 1251)) protein is tRNA pseudouridine synthase B.